Consider the following 71-residue polypeptide: Sodium channel neurotoxin MeuNaTxalpha-12 (71 aa).

A signal peptide spans Met-1–Ser-6. The LCN-type CS-alpha/beta domain occupies Arg-8–Gln-70. 4 disulfides stabilise this stretch: Cys-18–Cys-69, Cys-22–Cys-42, Cys-28–Cys-52, and Cys-32–Cys-54. Residue Arg-71 is a propeptide, removed by a carboxypeptidase.

The protein belongs to the long (4 C-C) scorpion toxin superfamily. Sodium channel inhibitor family. Alpha subfamily. As to expression, expressed by the venom gland.

The protein resides in the secreted. Its function is as follows. Alpha toxins bind voltage-independently at site-3 of sodium channels (Nav) and inhibit the inactivation of the activated channels, thereby blocking neuronal transmission. The chain is Sodium channel neurotoxin MeuNaTxalpha-12 from Mesobuthus eupeus (Lesser Asian scorpion).